The following is a 464-amino-acid chain: Dihydrolipoyl dehydrogenase (464 aa).

FAD is bound by residues 33–41 (EPKYWGGVC), Lys50, and Gly113. A disulfide bridge links Cys41 with Cys46. NAD(+) is bound by residues 178 to 182 (GAGAI), Glu201, and 266 to 269 (AIGF). FAD is bound by residues Asp309 and Ala317. His443 (proton acceptor) is an active-site residue.

It belongs to the class-I pyridine nucleotide-disulfide oxidoreductase family. In terms of assembly, homodimer. Part of the PDH complex, consisting of multiple copies of AceE (E1), DlaT (E2) and Lpd (E3), and of the BCKADH complex, consisting of multiple copies of BkdA/BkdB (E1), BkdC (E2) and Lpd (E3). FAD serves as cofactor.

It localises to the cytoplasm. It carries out the reaction N(6)-[(R)-dihydrolipoyl]-L-lysyl-[protein] + NAD(+) = N(6)-[(R)-lipoyl]-L-lysyl-[protein] + NADH + H(+). In terms of biological role, lipoamide dehydrogenase is a component of the alpha-ketoacid dehydrogenase complexes. Catalyzes the reoxidation of dihydrolipoyl groups which are covalently attached to the lipoate acyltransferase components (E2) of the complexes. The protein is Dihydrolipoyl dehydrogenase (lpd) of Mycobacterium bovis (strain ATCC BAA-935 / AF2122/97).